We begin with the raw amino-acid sequence, 248 residues long: Cell division protein ZapD (248 aa).

This sequence belongs to the ZapD family. Interacts with FtsZ.

The protein localises to the cytoplasm. In terms of biological role, cell division factor that enhances FtsZ-ring assembly. Directly interacts with FtsZ and promotes bundling of FtsZ protofilaments, with a reduction in FtsZ GTPase activity. This chain is Cell division protein ZapD, found in Aliivibrio fischeri (strain ATCC 700601 / ES114) (Vibrio fischeri).